We begin with the raw amino-acid sequence, 457 residues long: Probable mitochondrial-processing peptidase subunit beta (457 aa).

H66 provides a ligand contact to Zn(2+). Catalysis depends on E69, which acts as the Proton acceptor. Residues H70 and E146 each coordinate Zn(2+).

Belongs to the peptidase M16 family. In terms of assembly, heterodimer of mas2 (alpha) and qcr1 (beta) subunits, forming the mitochondrial processing protease (MPP) in which mas2 is involved in substrate recognition and binding and qcr1 is the catalytic subunit. Zn(2+) serves as cofactor.

Its subcellular location is the mitochondrion matrix. The enzyme catalyses Release of N-terminal transit peptides from precursor proteins imported into the mitochondrion, typically with Arg in position P2.. With respect to regulation, binding to mas2 is required for catalytic activity. Its function is as follows. Catalytic subunit of the essential mitochondrial processing protease (MPP), which cleaves the mitochondrial sequence off newly imported precursors proteins. Preferentially, cleaves after an arginine at position P2. In Schizosaccharomyces pombe (strain 972 / ATCC 24843) (Fission yeast), this protein is Probable mitochondrial-processing peptidase subunit beta (qcr1).